The primary structure comprises 162 residues: Cytochrome c-type biogenesis protein CcmE (162 aa).

At 1–8 the chain is on the cytoplasmic side; it reads MNPRRKKR. A helical; Signal-anchor for type II membrane protein transmembrane segment spans residues 9 to 29; it reads LTLAVALIGGVAAIASLLLYA. The Periplasmic segment spans residues 30 to 162; that stretch reads LNSNLNLFYT…YSQQKAPDTK (133 aa). Heme-binding residues include His131 and Tyr135. The tract at residues 139–162 is disordered; sequence EVAEAMGQKHEKLDYSQQKAPDTK. Residues 153–162 show a composition bias toward polar residues; it reads YSQQKAPDTK.

It belongs to the CcmE/CycJ family.

The protein resides in the cell inner membrane. Its function is as follows. Heme chaperone required for the biogenesis of c-type cytochromes. Transiently binds heme delivered by CcmC and transfers the heme to apo-cytochromes in a process facilitated by CcmF and CcmH. The sequence is that of Cytochrome c-type biogenesis protein CcmE from Shewanella putrefaciens (strain CN-32 / ATCC BAA-453).